A 101-amino-acid polypeptide reads, in one-letter code: Acylphosphatase (101 aa).

The Acylphosphatase-like domain occupies 13–101 (RARILVRGVV…GEFRGFEIRY (89 aa)). Active-site residues include R28 and N46.

This sequence belongs to the acylphosphatase family.

The enzyme catalyses an acyl phosphate + H2O = a carboxylate + phosphate + H(+). The polypeptide is Acylphosphatase (acyP) (Aeropyrum pernix (strain ATCC 700893 / DSM 11879 / JCM 9820 / NBRC 100138 / K1)).